A 349-amino-acid polypeptide reads, in one-letter code: Isopentenyl-diphosphate delta-isomerase (349 aa).

A substrate-binding site is contributed by 9-10 (RK). Residues 65 to 67 (AMT), Ser-95, and Asn-124 each bind FMN. Position 95–97 (95–97 (STH)) interacts with substrate. Residue Gln-154 coordinates substrate. Glu-155 is a Mg(2+) binding site. Residues Lys-186, Ser-211, Thr-216, 262–264 (GLR), and 283–284 (SR) each bind FMN.

The protein belongs to the IPP isomerase type 2 family. Homooctamer. Dimer of tetramers. FMN serves as cofactor. Requires NADPH as cofactor. Mg(2+) is required as a cofactor.

It is found in the cytoplasm. The enzyme catalyses isopentenyl diphosphate = dimethylallyl diphosphate. Involved in the biosynthesis of isoprenoids. Catalyzes the 1,3-allylic rearrangement of the homoallylic substrate isopentenyl (IPP) to its allylic isomer, dimethylallyl diphosphate (DMAPP). The polypeptide is Isopentenyl-diphosphate delta-isomerase (Staphylococcus aureus (strain MSSA476)).